Here is a 1203-residue protein sequence, read N- to C-terminus: DNA-directed RNA polymerase subunit beta' (1203 aa).

Positions 60, 62, 75, and 78 each coordinate Zn(2+). 3 residues coordinate Mg(2+): D449, D451, and D453. The Zn(2+) site is built by C818, C892, C899, and C902.

Belongs to the RNA polymerase beta' chain family. In terms of assembly, the RNAP catalytic core consists of 2 alpha, 1 beta, 1 beta' and 1 omega subunit. When a sigma factor is associated with the core the holoenzyme is formed, which can initiate transcription. Requires Mg(2+) as cofactor. Zn(2+) is required as a cofactor.

It carries out the reaction RNA(n) + a ribonucleoside 5'-triphosphate = RNA(n+1) + diphosphate. Its function is as follows. DNA-dependent RNA polymerase catalyzes the transcription of DNA into RNA using the four ribonucleoside triphosphates as substrates. The polypeptide is DNA-directed RNA polymerase subunit beta' (Bacillus thuringiensis (strain Al Hakam)).